We begin with the raw amino-acid sequence, 471 residues long: MATKVEDDSKPRLNACFIGHVDSGKSTTVGMLSYQLGAVDKREMEKYEKEAALNNKETFYLAYLTDKTDAERKRGITITTTLVNLPTEKFNINILDCPGHKDFVKNMVTGASQADVAVVIVPASGFESCVGVGGMLKTHIMISGILGCEKLIVCVNKMDEIPENKRMEKFNEVSAEMLRIVKRSHKDKNPIIIPISAFKGINLTKKGEKFEWFKGWKEKEGSSVIYTLEEALNYQDVPERHNDKPLRMPITKVCSIAGVGKIFTGRVEYGTITPNLKITIQPAGVVGETRSVEIHNKPRSMIPCGENCGVALKGGVIGEIDKVDAGHVISANDENKAVAYPGAKIRTIVVGRPKGLSPGYTPQINFGNCHSPGRIAKILSKVVGKEVHENPENVANGENFTGIVVFQKPLVIDKMERFQNLAKFALMDSNGVVGIGNVMEPLTRDQLLKDYGIDLNEDPKAAKKAASKKKA.

The tr-type G domain occupies K10 to E239. The tract at residues G19–S26 is G1. G19–S26 is a binding site for GTP. The G2 stretch occupies residues G75–T79. The segment at D96–G99 is G3. Residues D96–H100 and N156–D159 contribute to the GTP site. Residues N156–D159 are G4. The interval S196–F198 is G5.

It belongs to the TRAFAC class translation factor GTPase superfamily. Classic translation factor GTPase family. EF-Tu/EF-1A subfamily. In terms of assembly, component of the eukaryotic elongation factor 1 complex (eEF1).

The protein localises to the cytoplasm. Its pathway is protein biosynthesis; polypeptide chain elongation. Its function is as follows. GTP-binding component of the eukaryotic elongation factor 1 complex (eEF1). In its active GTP-bound form, binds to and delivers aminoacyl-tRNA to the A-site of ribosomes during protein biosynthesis. In the presence of a correct codon-anticodon match between the aminoacyl-tRNA and the A-site codon of the ribosome-bound mRNA, the ribosome acts as a GTPase activator and the GTP is hydrolyzed. The inactive GDP-bound form leaves the ribosome and must be recycled by its guanine nucleotide exchange factor (GEF) (eEF1B subcomplex) before binding another molecule of aminoacyl-tRNA. Required for nuclear export of aminoacyl-tRNAs. May also be involved in translational quality control by targeting cotranslationally damaged proteins to the proteasome. The protein is Elongation factor 1-alpha (TEF1) of Encephalitozoon cuniculi (strain GB-M1) (Microsporidian parasite).